The chain runs to 191 residues: Orotate phosphoribosyltransferase (191 aa).

114–122 is a binding site for 5-phospho-alpha-D-ribose 1-diphosphate; sequence EDVVTTGKS. Orotate-binding residues include Thr-118 and Arg-146.

This sequence belongs to the purine/pyrimidine phosphoribosyltransferase family. PyrE subfamily. Homodimer. Requires Mg(2+) as cofactor.

The enzyme catalyses orotidine 5'-phosphate + diphosphate = orotate + 5-phospho-alpha-D-ribose 1-diphosphate. Its pathway is pyrimidine metabolism; UMP biosynthesis via de novo pathway; UMP from orotate: step 1/2. Functionally, catalyzes the transfer of a ribosyl phosphate group from 5-phosphoribose 1-diphosphate to orotate, leading to the formation of orotidine monophosphate (OMP). The protein is Orotate phosphoribosyltransferase of Clostridium botulinum (strain Loch Maree / Type A3).